The following is a 522-amino-acid chain: Maturase K (522 aa).

Belongs to the intron maturase 2 family. MatK subfamily.

The protein localises to the plastid. It localises to the chloroplast. In terms of biological role, usually encoded in the trnK tRNA gene intron. Probably assists in splicing its own and other chloroplast group II introns. The protein is Maturase K of Schizorhiza neglecta (Lapeirousia neglecta).